The chain runs to 480 residues: DNA repair protein RadA (480 aa).

The segment at 10-27 (CSECRHVSAKWVGRCLEC) adopts a C4-type zinc-finger fold. 95–102 (GDPGVGKS) serves as a coordination point for ATP. The RadA KNRFG motif motif lies at 254–258 (KNRFG). The segment at 353-480 (DIYLSTVGGM…TGHVPLGRGT (128 aa)) is lon-protease-like. Residues 459–480 (GTTLATPPSHSGTGHVPLGRGT) form a disordered region. The segment covering 461–470 (TLATPPSHSG) has biased composition (polar residues).

This sequence belongs to the RecA family. RadA subfamily.

Functionally, DNA-dependent ATPase involved in processing of recombination intermediates, plays a role in repairing DNA breaks. Stimulates the branch migration of RecA-mediated strand transfer reactions, allowing the 3' invading strand to extend heteroduplex DNA faster. Binds ssDNA in the presence of ADP but not other nucleotides, has ATPase activity that is stimulated by ssDNA and various branched DNA structures, but inhibited by SSB. Does not have RecA's homology-searching function. The chain is DNA repair protein RadA from Mycobacterium tuberculosis (strain CDC 1551 / Oshkosh).